The chain runs to 468 residues: Citrate synthase, mitochondrial (468 aa).

A mitochondrion-targeting transit peptide spans 1 to 30 (MSFLSISRLAPRLLSSKNAACVVVAARNAS). Catalysis depends on residues H303 and H349. An oxaloacetate-binding site is contributed by R358. The active site involves D404. Residues R430 and R450 each contribute to the oxaloacetate site.

It belongs to the citrate synthase family. As to quaternary structure, homodimer.

It localises to the mitochondrion matrix. It carries out the reaction oxaloacetate + acetyl-CoA + H2O = citrate + CoA + H(+). It participates in carbohydrate metabolism; tricarboxylic acid cycle; isocitrate from oxaloacetate: step 1/2. In terms of biological role, key enzyme of the Krebs tricarboxylic acid cycle which catalyzes the synthesis of citrate from acetyl coenzyme A and oxaloacetate. The sequence is that of Citrate synthase, mitochondrial (cs) from Danio rerio (Zebrafish).